Consider the following 309-residue polypeptide: Ornithine carbamoyltransferase (309 aa).

Carbamoyl phosphate is bound by residues 52–55 (STRT), Q79, R103, and 130–133 (HPCQ). Residues N161, D221, and 225–226 (SM) each bind L-ornithine. Carbamoyl phosphate contacts are provided by residues 261–262 (CL) and R289.

It belongs to the aspartate/ornithine carbamoyltransferase superfamily. OTCase family.

It localises to the cytoplasm. It catalyses the reaction carbamoyl phosphate + L-ornithine = L-citrulline + phosphate + H(+). Its pathway is amino-acid biosynthesis; L-arginine biosynthesis; L-arginine from L-ornithine and carbamoyl phosphate: step 1/3. Functionally, reversibly catalyzes the transfer of the carbamoyl group from carbamoyl phosphate (CP) to the N(epsilon) atom of ornithine (ORN) to produce L-citrulline. The polypeptide is Ornithine carbamoyltransferase (Methanoculleus marisnigri (strain ATCC 35101 / DSM 1498 / JR1)).